The sequence spans 348 residues: GTPase Obg (348 aa).

The region spanning 1-160 (MHFLDQAKIF…MWVWLRLKLL (160 aa)) is the Obg domain. A disordered region spans residues 120–145 (RGGDGGRGNASYKTSTNRAPRQHGPG). Residues 161-328 (ADAGLVGLPN…VLDKLLEAIG (168 aa)) form the OBG-type G domain. Residues 167 to 174 (GLPNAGKS), 192 to 196 (FTTLR), 213 to 216 (DIPG), 280 to 283 (NKID), and 309 to 311 (SGA) each bind GTP. Residues serine 174 and threonine 194 each contribute to the Mg(2+) site. The interval 326 to 348 (AIGQPEPGPDADEEEKGGDWSPI) is disordered.

It belongs to the TRAFAC class OBG-HflX-like GTPase superfamily. OBG GTPase family. As to quaternary structure, monomer. Mg(2+) is required as a cofactor.

The protein localises to the cytoplasm. Its function is as follows. An essential GTPase which binds GTP, GDP and possibly (p)ppGpp with moderate affinity, with high nucleotide exchange rates and a fairly low GTP hydrolysis rate. Plays a role in control of the cell cycle, stress response, ribosome biogenesis and in those bacteria that undergo differentiation, in morphogenesis control. The sequence is that of GTPase Obg from Sphingopyxis alaskensis (strain DSM 13593 / LMG 18877 / RB2256) (Sphingomonas alaskensis).